Consider the following 380-residue polypeptide: SAM and SH3 domain-containing protein 3 (380 aa).

2 disordered regions span residues 1–76 and 96–168; these read MLRR…GKKW and LSEE…SPAP. Residues 22–41 are compositionally biased toward low complexity; that stretch reads LQRSSSFKDFAKSKPSSPVV. Phosphoserine is present on residues S27, S34, and S42. Position 61 is a phosphothreonine (T61). S97 bears the Phosphoserine mark. T103 carries the post-translational modification Phosphothreonine. S110 carries the post-translational modification Phosphoserine. Residue T112 is modified to Phosphothreonine. Residues S113 and S120 each carry the phosphoserine modification. The segment covering 141 to 150 has biased composition (polar residues); it reads LSRQTSTGSE. An SH3 domain is found at 173–234; sequence PFCGRARVHT…KFIYVDVLPE (62 aa). The SAM domain maps to 252–316; sequence PKPKTLHELL…LTAAELLLDY (65 aa). T318 carries the phosphothreonine modification. Positions 318 to 327 are enriched in acidic residues; it reads TGSEEAEEGA. Residues 318-380 are disordered; sequence TGSEEAEEGA…LQGLSLSGAP (63 aa). Phosphoserine is present on S320. Over residues 369-380 the composition is skewed to polar residues; it reads EQLQGLSLSGAP.

In terms of tissue distribution, preferentially expressed in lymphoid tissues. Expressed in bone marrow, thymus, spleen, lymph nodes and Peyer patches of gut. In the spleen and lymph nodes, expressed in both T- and B-cells. In the thymus, in the medulla and cortex.

May function as a signaling adapter protein in lymphocytes. In Mus musculus (Mouse), this protein is SAM and SH3 domain-containing protein 3 (Sash3).